We begin with the raw amino-acid sequence, 109 residues long: Large ribosomal subunit protein eL30 (109 aa).

This sequence belongs to the eukaryotic ribosomal protein eL30 family. In terms of assembly, component of the large ribosomal subunit (LSU). Mature N.crassa ribosomes consist of a small (40S) and a large (60S) subunit. The 40S small subunit contains 1 molecule of ribosomal RNA (18S rRNA) and at least 32 different proteins. The large 60S subunit contains 3 rRNA molecules (26S, 5.8S and 5S rRNA) and at least 42 different proteins.

The protein resides in the cytoplasm. Its function is as follows. Component of the ribosome, a large ribonucleoprotein complex responsible for the synthesis of proteins in the cell. The small ribosomal subunit (SSU) binds messenger RNAs (mRNAs) and translates the encoded message by selecting cognate aminoacyl-transfer RNA (tRNA) molecules. The large subunit (LSU) contains the ribosomal catalytic site termed the peptidyl transferase center (PTC), which catalyzes the formation of peptide bonds, thereby polymerizing the amino acids delivered by tRNAs into a polypeptide chain. The nascent polypeptides leave the ribosome through a tunnel in the LSU and interact with protein factors that function in enzymatic processing, targeting, and the membrane insertion of nascent chains at the exit of the ribosomal tunnel. This is Large ribosomal subunit protein eL30 (rpl-30) from Neurospora crassa (strain ATCC 24698 / 74-OR23-1A / CBS 708.71 / DSM 1257 / FGSC 987).